Reading from the N-terminus, the 185-residue chain is Dirigent protein 12 (185 aa).

An N-terminal signal peptide occupies residues 1–25; that stretch reads MTNQIYKQVFSFFLSVLLLQSSTVS. A disulfide bridge connects residues Cys-37 and Cys-184. Asn-56 and Asn-120 each carry an N-linked (GlcNAc...) asparagine glycan.

The protein belongs to the plant dirigent protein family. In terms of assembly, homodimer. Seed coat specific expression.

Its subcellular location is the secreted. It localises to the extracellular space. It is found in the apoplast. Its function is as follows. Dirigent proteins impart stereoselectivity on the phenoxy radical-coupling reaction, yielding optically active lignans from two molecules of coniferyl alcohol in the biosynthesis of lignans, flavonolignans, and alkaloids and thus plays a central role in plant secondary metabolism. Required for seed accumulation of neolignans. The sequence is that of Dirigent protein 12 (DIR12) from Arabidopsis thaliana (Mouse-ear cress).